The following is a 186-amino-acid chain: Tumor necrosis factor, alpha-induced protein 8-like protein 2 B (186 aa).

It belongs to the TNFAIP8 family. TNFAIP8L2 subfamily.

In terms of biological role, acts as a negative regulator of innate and adaptive immunity by maintaining immune homeostasis. Negative regulator of Toll-like receptor and T-cell receptor function. Prevents hyperresponsiveness of the immune system and maintains immune homeostasis. Inhibits jun/ap1 and NF-kappa-B activation. Promotes Fas-induced apoptosis. This chain is Tumor necrosis factor, alpha-induced protein 8-like protein 2 B (tnfaip8l2b), found in Danio rerio (Zebrafish).